The following is a 206-amino-acid chain: Phosphoheptose isomerase (206 aa).

In terms of domain architecture, SIS spans leucine 37–glutamate 195. Residue asparagine 52–glycine 54 participates in substrate binding. The Zn(2+) site is built by histidine 61 and glutamate 65. Residues glutamate 65, asparagine 93–aspartate 94, serine 119–serine 121, serine 124, and glutamine 172 contribute to the substrate site. 2 residues coordinate Zn(2+): glutamine 172 and histidine 180.

This sequence belongs to the SIS family. GmhA subfamily. Homotetramer. It depends on Zn(2+) as a cofactor.

It localises to the cytoplasm. It catalyses the reaction 2 D-sedoheptulose 7-phosphate = D-glycero-alpha-D-manno-heptose 7-phosphate + D-glycero-beta-D-manno-heptose 7-phosphate. It participates in carbohydrate biosynthesis; D-glycero-D-manno-heptose 7-phosphate biosynthesis; D-glycero-alpha-D-manno-heptose 7-phosphate and D-glycero-beta-D-manno-heptose 7-phosphate from sedoheptulose 7-phosphate: step 1/1. Functionally, catalyzes the isomerization of sedoheptulose 7-phosphate in D-glycero-D-manno-heptose 7-phosphate. This is Phosphoheptose isomerase from Hamiltonella defensa subsp. Acyrthosiphon pisum (strain 5AT).